We begin with the raw amino-acid sequence, 381 residues long: V-type proton ATPase subunit C 1-B (381 aa).

Position 2 is an N-acetylthreonine (Thr2).

This sequence belongs to the V-ATPase C subunit family. As to quaternary structure, V-ATPase is a heteromultimeric enzyme made up of two complexes: the ATP-hydrolytic V1 complex and the proton translocation V0 complex. The V1 complex consists of three catalytic AB heterodimers that form a heterohexamer, three peripheral stalks each consisting of EG heterodimers, one central rotor including subunits D and F, and the regulatory subunits C and H. The proton translocation complex V0 consists of the proton transport subunit a, a ring of proteolipid subunits c9c'', rotary subunit d, subunits e and f, and two accessory subunits.

Its function is as follows. Subunit of the V1 complex of vacuolar(H+)-ATPase (V-ATPase), a multisubunit enzyme composed of a peripheral complex (V1) that hydrolyzes ATP and a membrane integral complex (V0) that translocates protons. V-ATPase is responsible for acidifying and maintaining the pH of intracellular compartments and in some cell types, is targeted to the plasma membrane, where it is responsible for acidifying the extracellular environment. Subunit C is necessary for the assembly of the catalytic sector of the enzyme and is likely to have a specific function in its catalytic activity. The polypeptide is V-type proton ATPase subunit C 1-B (atp6v1c1b) (Danio rerio (Zebrafish)).